Consider the following 445-residue polypeptide: Hydroxymethylglutaryl-CoA synthase (445 aa).

Aspartate 31 lines the (3S)-3-hydroxy-3-methylglutaryl-CoA pocket. The Proton donor/acceptor role is filled by glutamate 83. (3S)-3-hydroxy-3-methylglutaryl-CoA-binding residues include cysteine 120, threonine 163, serine 211, histidine 244, lysine 253, asparagine 328, and serine 364. The active-site Acyl-thioester intermediate is the cysteine 120. Histidine 244 serves as the catalytic Proton donor/acceptor.

This sequence belongs to the thiolase-like superfamily. HMG-CoA synthase family.

It carries out the reaction acetoacetyl-CoA + acetyl-CoA + H2O = (3S)-3-hydroxy-3-methylglutaryl-CoA + CoA + H(+). Its pathway is metabolic intermediate biosynthesis; (R)-mevalonate biosynthesis; (R)-mevalonate from acetyl-CoA: step 2/3. Its activity is regulated as follows. In contrast to bacterial and eukaryotic HMG-CoA synthases, is insensitive to feedback substrate inhibition by acetoacetyl-CoA. Enzymatic activity is inhibited by hymeglusin, which also blocks the propagation of H.volcanii cells in vivo, indicating the critical role that the mevalonate pathway plays in isoprenoid biosynthesis by these archaea. Functionally, catalyzes the condensation of acetyl-CoA with acetoacetyl-CoA to form 3-hydroxy-3-methylglutaryl-CoA (HMG-CoA). Functions in the mevalonate (MVA) pathway leading to isopentenyl diphosphate (IPP), a key precursor for the biosynthesis of isoprenoid compounds such as archaeal membrane lipids. The polypeptide is Hydroxymethylglutaryl-CoA synthase (hmgB) (Haloferax volcanii (strain ATCC 29605 / DSM 3757 / JCM 8879 / NBRC 14742 / NCIMB 2012 / VKM B-1768 / DS2) (Halobacterium volcanii)).